The chain runs to 244 residues: 1-(5-phosphoribosyl)-5-[(5-phosphoribosylamino)methylideneamino] imidazole-4-carboxamide isomerase (244 aa).

The Proton acceptor role is filled by aspartate 8. Aspartate 129 serves as the catalytic Proton donor.

Belongs to the HisA/HisF family.

Its subcellular location is the cytoplasm. The catalysed reaction is 1-(5-phospho-beta-D-ribosyl)-5-[(5-phospho-beta-D-ribosylamino)methylideneamino]imidazole-4-carboxamide = 5-[(5-phospho-1-deoxy-D-ribulos-1-ylimino)methylamino]-1-(5-phospho-beta-D-ribosyl)imidazole-4-carboxamide. Its pathway is amino-acid biosynthesis; L-histidine biosynthesis; L-histidine from 5-phospho-alpha-D-ribose 1-diphosphate: step 4/9. This is 1-(5-phosphoribosyl)-5-[(5-phosphoribosylamino)methylideneamino] imidazole-4-carboxamide isomerase from Bradyrhizobium sp. (strain ORS 278).